Reading from the N-terminus, the 176-residue chain is Inorganic pyrophosphatase (176 aa).

Lys-30, Arg-44, and Tyr-56 together coordinate substrate. Positions 66, 71, and 103 each coordinate Mg(2+). Residue Tyr-142 coordinates substrate.

The protein belongs to the PPase family. Homohexamer. The cofactor is Mg(2+).

Its subcellular location is the cytoplasm. The catalysed reaction is diphosphate + H2O = 2 phosphate + H(+). In terms of biological role, catalyzes the hydrolysis of inorganic pyrophosphate (PPi) forming two phosphate ions. The chain is Inorganic pyrophosphatase from Vibrio cholerae serotype O1 (strain ATCC 39315 / El Tor Inaba N16961).